Consider the following 530-residue polypeptide: MKLGRDIPIYKLIIIKNESIENNLKEISFSDNFKCQICEGLLISSLIPNRMKALQCINGHCFCLTCWESILEIKSECPTCRIQIQSMNTLSNNLFIIKSISESIKIHCPNYLNFDNSNNFNGCKEIITIDEIDRHESKCEFRFIKCSINNQCNEIIRFNERDKHESQCDFIIQKCTHCDESVQMKQMQGHILFECLKVLITCQHCSLQFTRLKLQNHIENHCKEIKIECPFKSLKIIYNNNNNDNDNNDSDENNSNQSLSSSSLSSSIIPLSPCNELMKRSELSKHFIRNHQYHNELVSIVLKKQENKIKKLETIIQQNNVNQNFEISIIKHSNSLTRDSFYKENKKKDKLIQDLMKRVLILEHQQQQNQIQNQIQNQIQKLSNKSIFTTTTTTTSTSDKNNNNNNNNNNNNNNNNEDEEDDDNIKNNDNQGNLKSLREMFNTISNFKDDENEQQQIQQQQQLPFTSFGPLSVQQQNNPTKQFNQLSQPQTQPQSQSQSQSLFGEWSPITINQNQNTPSNPFSIFSGTSL.

The segment at 35–81 (CQICEGLLISSLIPNRMKALQCINGHCFCLTCWESILEIKSECPTCR) adopts an RING-type; degenerate zinc-finger fold. 2 TRAF-type zinc fingers span residues 134–188 (RHES…KQMQ) and 189–246 (GHIL…NDND). 3 disordered regions span residues 242 to 267 (NNDN…LSSS), 391 to 432 (TTTT…DNQG), and 483 to 530 (FNQL…GTSL). 3 stretches are compositionally biased toward low complexity: residues 253–267 (NNSN…LSSS), 391–415 (TTTT…NNNN), and 485–502 (QLSQ…SQSL). The stretch at 361–422 (ILEHQQQQNQ…NNNNEDEEDD (62 aa)) forms a coiled coil. Over residues 509–530 (ITINQNQNTPSNPFSIFSGTSL) the composition is skewed to polar residues.

Belongs to the TNF receptor-associated factor family.

It localises to the cytoplasm. Functionally, probable adapter protein and signal transducer that links members of the tumor necrosis factor receptor family to different signaling pathways by association with the receptor cytoplasmic domain and kinases. In Dictyostelium discoideum (Social amoeba), this protein is TNF receptor-associated factor family protein DDB_G0272829.